The sequence spans 309 residues: Aspartate carbamoyltransferase catalytic subunit (309 aa).

Carbamoyl phosphate contacts are provided by R55 and T56. An L-aspartate-binding site is contributed by K85. The carbamoyl phosphate site is built by R106, H135, and Q138. R168 and R230 together coordinate L-aspartate. Carbamoyl phosphate-binding residues include L268 and P269.

Belongs to the aspartate/ornithine carbamoyltransferase superfamily. ATCase family. In terms of assembly, heterododecamer (2C3:3R2) of six catalytic PyrB chains organized as two trimers (C3), and six regulatory PyrI chains organized as three dimers (R2).

It catalyses the reaction carbamoyl phosphate + L-aspartate = N-carbamoyl-L-aspartate + phosphate + H(+). The protein operates within pyrimidine metabolism; UMP biosynthesis via de novo pathway; (S)-dihydroorotate from bicarbonate: step 2/3. Its function is as follows. Catalyzes the condensation of carbamoyl phosphate and aspartate to form carbamoyl aspartate and inorganic phosphate, the committed step in the de novo pyrimidine nucleotide biosynthesis pathway. The polypeptide is Aspartate carbamoyltransferase catalytic subunit (Vibrio vulnificus (strain YJ016)).